Consider the following 323-residue polypeptide: Aldo-keto reductase family 1 member C1 (323 aa).

NADP(+)-binding positions include 20 to 24 (GFGTY) and aspartate 50. Residue tyrosine 24 coordinates substrate. Residue tyrosine 55 is the Proton donor of the active site. Residue histidine 117 coordinates substrate. NADP(+)-binding positions include 166 to 167 (SN), glutamine 190, and 216 to 222 (YSALGSH). Positions 222 and 227 each coordinate substrate. 270–280 (KSYNEQRIRQN) lines the NADP(+) pocket.

Belongs to the aldo/keto reductase family. Monomer.

It is found in the cytoplasm. It localises to the cytosol. It carries out the reaction a 3alpha-hydroxysteroid + NADP(+) = a 3-oxosteroid + NADPH + H(+). The catalysed reaction is a 3alpha-hydroxysteroid + NAD(+) = a 3-oxosteroid + NADH + H(+). It catalyses the reaction (17R,20S)-17,20-dihydroxypregn-4-en-3-one + NADP(+) = 17alpha-hydroxyprogesterone + NADPH + H(+). The enzyme catalyses (17R,20S)-17,20-dihydroxypregn-4-en-3-one + NAD(+) = 17alpha-hydroxyprogesterone + NADH + H(+). It carries out the reaction (20S)-hydroxypregn-4-en-3-one + NADP(+) = progesterone + NADPH + H(+). The catalysed reaction is (20S)-hydroxypregn-4-en-3-one + NAD(+) = progesterone + NADH + H(+). It catalyses the reaction (1R,2R)-1,2-dihydrobenzene-1,2-diol + NADP(+) = catechol + NADPH + H(+). The enzyme catalyses (S)-indan-1-ol + NAD(+) = indan-1-one + NADH + H(+). It carries out the reaction (S)-indan-1-ol + NADP(+) = indan-1-one + NADPH + H(+). The catalysed reaction is 5alpha-androstane-3alpha,17beta-diol + NADP(+) = 17beta-hydroxy-5alpha-androstan-3-one + NADPH + H(+). It catalyses the reaction 5alpha-androstane-3beta,17beta-diol + NADP(+) = 17beta-hydroxy-5alpha-androstan-3-one + NADPH + H(+). The enzyme catalyses 5alpha-androstane-3alpha,17beta-diol + NAD(+) = 17beta-hydroxy-5alpha-androstan-3-one + NADH + H(+). It carries out the reaction 17beta-hydroxy-5alpha-androstan-3-one + NADP(+) = 5alpha-androstan-3,17-dione + NADPH + H(+). The catalysed reaction is androsterone + NADP(+) = 5alpha-androstan-3,17-dione + NADPH + H(+). It catalyses the reaction androsterone + NADPH + H(+) = 5alpha-androstane-3alpha,17beta-diol + NADP(+). The enzyme catalyses 5alpha-androstane-3alpha,17beta-diol + NAD(+) = androsterone + NADH + H(+). It carries out the reaction 17beta-estradiol + NADP(+) = estrone + NADPH + H(+). The catalysed reaction is 17beta-estradiol + NAD(+) = estrone + NADH + H(+). It catalyses the reaction testosterone + NADP(+) = androst-4-ene-3,17-dione + NADPH + H(+). The enzyme catalyses 20alpha-hydroxy-5beta-pregnan-3-one + NADP(+) = 5beta-pregnan-3,20-dione + NADPH + H(+). It carries out the reaction 3beta-hydroxy-5beta-pregnane-20-one + NADP(+) = 5beta-pregnan-3,20-dione + NADPH + H(+). The catalysed reaction is 3beta-hydroxy-5beta-pregnane-20-one + NADPH + H(+) = 3beta,20alpha-dihydroxy-5beta-pregnane + NADP(+). It catalyses the reaction (3beta,5alpha,17beta)-3-hydroxyandrostan-17-yl sulfate + NADP(+) = 5alpha-dihydrotestosterone sulfate + NADPH + H(+). It participates in steroid metabolism. In terms of biological role, cytosolic aldo-keto reductase that catalyzes the NADH and NADPH-dependent reduction of ketosteroids to hydroxysteroids. Most probably acts as a reductase in vivo since the oxidase activity measured in vitro is inhibited by physiological concentrations of NADPH. Displays a broad positional specificity acting on positions 3, 17 and 20 of steroids and regulates the metabolism of hormones like estrogens and androgens. May also reduce conjugated steroids such as 5alpha-dihydrotestosterone sulfate. Displays affinity for bile acids. In Pongo abelii (Sumatran orangutan), this protein is Aldo-keto reductase family 1 member C1 (AKR1C1).